We begin with the raw amino-acid sequence, 702 residues long: Ferrioxamine B receptor (702 aa).

Residues 1–30 (MPLEMFMFATTRMALLIGGAIGGATFPLFA) form the signal peptide. The TBDR plug domain occupies 55 to 168 (PDIETPQSVS…PGGIVALTSR (114 aa)). The 530-residue stretch at 173–702 (DAGGEVKLFA…SIVGSVSWAF (530 aa)) folds into the TBDR beta-barrel domain.

This sequence belongs to the TonB-dependent receptor family.

It localises to the cell outer membrane. Ferrioxamine binding and uptake, in association with the TonB protein. May play a role in intestinal colonization. The sequence is that of Ferrioxamine B receptor (foxA) from Salmonella typhimurium (strain SL1344).